We begin with the raw amino-acid sequence, 511 residues long: Coatomer subunit delta (511 aa).

Residues 168-177 show a composition bias toward basic and acidic residues; it reads QARRDAERQG. A disordered region spans residues 168-188; sequence QARRDAERQGKKAPGFGGFGS. A Phosphoserine modification is found at S223. Residues K233 and K241 each carry the N6-acetyllysine modification. Position 244 is a phosphoserine (S244). The region spanning 271-511 is the MHD domain; it reads MESVHMKIEE…TFLVDKYEIL (241 aa). N6-acetyllysine is present on residues K309 and K351. S493 bears the Phosphoserine mark.

Belongs to the adaptor complexes medium subunit family. Delta-COP subfamily. In terms of assembly, oligomeric complex that consists of at least the alpha, beta, beta', gamma, delta, epsilon and zeta subunits. Ubiquitously expressed.

The protein localises to the cytoplasm. Its subcellular location is the golgi apparatus membrane. The protein resides in the cytoplasmic vesicle. It localises to the COPI-coated vesicle membrane. Component of the coatomer, a cytosolic protein complex that binds to dilysine motifs and reversibly associates with Golgi non-clathrin-coated vesicles, which further mediate biosynthetic protein transport from the ER, via the Golgi up to the trans Golgi network. The coatomer complex is required for budding from Golgi membranes, and is essential for the retrograde Golgi-to-ER transport of dilysine-tagged proteins. In mammals, the coatomer can only be recruited by membranes associated to ADP-ribosylation factors (ARFs), which are small GTP-binding proteins; the complex also influences the Golgi structural integrity, as well as the processing, activity, and endocytic recycling of LDL receptors. The chain is Coatomer subunit delta (ARCN1) from Homo sapiens (Human).